A 301-amino-acid chain; its full sequence is 1,5-anhydro-D-fructose reductase (301 aa).

D35 lines the NADP(+) pocket. The active-site Proton donor is Y40. H102 serves as a coordination point for substrate. NADP(+)-binding positions include Q175 and 246-258 (IPKS…IREN).

It belongs to the aldo/keto reductase family. In terms of assembly, monomer.

Its subcellular location is the cytoplasm. It catalyses the reaction 1,5-anhydro-D-glucitol + NADP(+) = 1,5-anhydro-D-fructose + NADPH + H(+). With respect to regulation, inhibited by p-chloromercuribenzoic acid and alkyliodines. Its function is as follows. Catalyzes the NADPH-dependent reduction of 1,5-anhydro-D-fructose (AF) to 1,5-anhydro-D-glucitol. This chain is 1,5-anhydro-D-fructose reductase (Akr1e2), found in Mus musculus (Mouse).